Consider the following 78-residue polypeptide: uncharacterized protein (78 aa).

2 helical membrane passes run 20 to 40 (SVYFPPFFKAFAFGFVIWLVV) and 57 to 77 (LLMDLSLFAICVCLALAILIA).

The protein resides in the cell membrane. This is an uncharacterized protein from Escherichia coli (strain K12).